A 310-amino-acid chain; its full sequence is Phosphoribosylaminoimidazole-succinocarboxamide synthase (310 aa).

The protein belongs to the SAICAR synthetase family.

It carries out the reaction 5-amino-1-(5-phospho-D-ribosyl)imidazole-4-carboxylate + L-aspartate + ATP = (2S)-2-[5-amino-1-(5-phospho-beta-D-ribosyl)imidazole-4-carboxamido]succinate + ADP + phosphate + 2 H(+). It participates in purine metabolism; IMP biosynthesis via de novo pathway; 5-amino-1-(5-phospho-D-ribosyl)imidazole-4-carboxamide from 5-amino-1-(5-phospho-D-ribosyl)imidazole-4-carboxylate: step 1/2. The protein is Phosphoribosylaminoimidazole-succinocarboxamide synthase of Stenotrophomonas maltophilia (strain K279a).